We begin with the raw amino-acid sequence, 347 residues long: MLVLGIESSCDETGVALYDTHSGLRAHALYSQIAMHREYGGVVPELASRDHIRRVIPLLEEVLGKAGATRADIDAIAYTKGPGLAGALLVGASVANALAFALGKPLVAVHHLEGHLLSPLLEADRPEFPFLALLVSGGHTQLMRVDAVGQYTLLGETLDDAAGEAFDKTAKLLGLGYPGGPAVSRLAEFGNPGVFDLPRPMLHSGNFDFSFAGLKTAVLTQVRKLNLTDSETCYQPRADLARAFVDAIVEVLVKKTLRAAREHGLKRIVVAGGVGANRQLREGLNAEGKKRGLRVYYPDLQFCTDNGAMIAFAGAMRLQADPAQVQDGYGYGVTPRWDLEDIRIRHA.

H111 and H115 together coordinate Fe cation. Substrate-binding positions include 134–138 (LVSGG), D167, G180, and N277. A Fe cation-binding site is contributed by D305.

This sequence belongs to the KAE1 / TsaD family. Fe(2+) serves as cofactor.

It localises to the cytoplasm. The catalysed reaction is L-threonylcarbamoyladenylate + adenosine(37) in tRNA = N(6)-L-threonylcarbamoyladenosine(37) in tRNA + AMP + H(+). In terms of biological role, required for the formation of a threonylcarbamoyl group on adenosine at position 37 (t(6)A37) in tRNAs that read codons beginning with adenine. Is involved in the transfer of the threonylcarbamoyl moiety of threonylcarbamoyl-AMP (TC-AMP) to the N6 group of A37, together with TsaE and TsaB. TsaD likely plays a direct catalytic role in this reaction. The chain is tRNA N6-adenosine threonylcarbamoyltransferase from Ralstonia pickettii (strain 12J).